The chain runs to 479 residues: mRNA export factor ICP27 homolog (479 aa).

The span at 1 to 15 (MVPSQRLSRTSSISS) shows a compositional bias: low complexity. Disordered stretches follow at residues 1 to 77 (MVPS…PSSV) and 91 to 210 (KKWD…NKPW). The segment covering 35 to 44 (TDCDMDPMEG) has biased composition (acidic residues). The segment covering 132-142 (EVHGCTDESYG) has biased composition (basic and acidic residues). Zn(2+)-binding residues include cysteine 354, histidine 445, cysteine 449, and cysteine 454. A CHC2-type zinc finger spans residues 354-454 (CFLPNTRDYN…HTRDCRSASC (101 aa)).

The protein belongs to the HHV-1 ICP27 protein family. Interacts with host XPO1 and with the XPO1 export pathway components small GTPase RAN and nucleoporin NUP214. Interacts with host SPEN, OTT1 and OTT3. Interacts with host SRSF1, SRSF3, SRSF7 and SRPK1. Interacts with host DHX9; this interaction may have an inhibitory effect on virion production. Interacts (via N-terminus) with host NXF1; this interaction plays a role in mRNA export. Post-translationally, phosphorylated by cellular protein kinase CK2.

It is found in the host nucleus. It localises to the host cytoplasm. In terms of biological role, promotes the nuclear export of a subset of early and late viral mRNAs by interacting with mRNAs and cellular export proteins. Additionally may prevent the establishment of cellular antiviral state, by acting as an alternative splicing factor for cellular RNAs such as STAT1, resulting in a STAT1 mRNA incapable of producing the STAT1alpha isoform. The sequence is that of mRNA export factor ICP27 homolog from Homo sapiens (Human).